Reading from the N-terminus, the 737-residue chain is Catalase-peroxidase (737 aa).

Positions 1–23 (MLKKILPVLITLAIVHNTPTAWA) are cleaved as a signal peptide. Residues 102–223 (WHGAGTYRIY…LAATQMGLIY (122 aa)) constitute a cross-link (tryptophyl-tyrosyl-methioninium (Trp-Tyr) (with M-249)). Catalysis depends on histidine 103, which acts as the Proton acceptor. A cross-link (tryptophyl-tyrosyl-methioninium (Tyr-Met) (with W-102)) is located at residues 223–249 (YVNPEGPNGKPDPVAAAKDIREAFARM). Histidine 264 contributes to the heme b binding site.

This sequence belongs to the peroxidase family. Peroxidase/catalase subfamily. Homodimer or homotetramer. Heme b serves as cofactor. Post-translationally, formation of the three residue Trp-Tyr-Met cross-link is important for the catalase, but not the peroxidase activity of the enzyme.

The catalysed reaction is H2O2 + AH2 = A + 2 H2O. It carries out the reaction 2 H2O2 = O2 + 2 H2O. Its function is as follows. Bifunctional enzyme with both catalase and broad-spectrum peroxidase activity. The protein is Catalase-peroxidase of Yersinia pseudotuberculosis serotype O:3 (strain YPIII).